A 209-amino-acid chain; its full sequence is Kynurenine formamidase (209 aa).

W20 provides a ligand contact to substrate. Zn(2+)-binding residues include H50, H54, and D56. H60 (proton donor/acceptor) is an active-site residue. Positions 161 and 173 each coordinate Zn(2+).

The protein belongs to the Cyclase 1 superfamily. KynB family. As to quaternary structure, homodimer. Zn(2+) is required as a cofactor.

The enzyme catalyses N-formyl-L-kynurenine + H2O = L-kynurenine + formate + H(+). Its pathway is amino-acid degradation; L-tryptophan degradation via kynurenine pathway; L-kynurenine from L-tryptophan: step 2/2. Catalyzes the hydrolysis of N-formyl-L-kynurenine to L-kynurenine, the second step in the kynurenine pathway of tryptophan degradation. The polypeptide is Kynurenine formamidase (Bacillus thuringiensis subsp. konkukian (strain 97-27)).